Here is a 1316-residue protein sequence, read N- to C-terminus: DNA-directed RNA polymerase subunit beta' (1316 aa).

Residues cysteine 60, cysteine 62, cysteine 75, and cysteine 78 each coordinate Zn(2+). Mg(2+) is bound by residues aspartate 535, aspartate 537, and aspartate 539. Residues cysteine 891, cysteine 968, cysteine 975, and cysteine 978 each coordinate Zn(2+).

It belongs to the RNA polymerase beta' chain family. The RNAP catalytic core consists of 2 alpha, 1 beta, 1 beta' and 1 omega subunit. When a sigma factor is associated with the core the holoenzyme is formed, which can initiate transcription. Mg(2+) serves as cofactor. It depends on Zn(2+) as a cofactor.

It carries out the reaction RNA(n) + a ribonucleoside 5'-triphosphate = RNA(n+1) + diphosphate. Functionally, DNA-dependent RNA polymerase catalyzes the transcription of DNA into RNA using the four ribonucleoside triphosphates as substrates. The protein is DNA-directed RNA polymerase subunit beta' of Mycobacterium tuberculosis (strain ATCC 25177 / H37Ra).